Here is a 639-residue protein sequence, read N- to C-terminus: MEPDDGHNSLNQDNGIPIVLDPNLINLRSRAASATVTTNGTTADSSEDSGSQQSVSSAPIQQNSEEHSLVSNPYETYGRMPLQKLIPLILQMRNASSFSELTEEDLLRDIEREEKGILTTGLDVEGDIEMGDADEESDLKPQEITDDDSNARLKPNNDSAIPQEEFNQMKREVLEHINLALNESSLSLEFISLLLSSVRPSVGVGSMSPFLKRSVPTASLNADKVELPPKNKTETLTLAVINRGWKLRSLEDSKALLKENYAKLQKSLEVEHAHWAMISQHISSTDVVFKMRDRQTGKRSLAVKYGYEDSGSLYKQDRGVAVLRHNMDLNKLELVPISNSKEEVHITANSVERFMRVHIYTKIEEEDDYILSGESSIDDQSLLQPCHDDISRQIARLKFFIFERELMYQLKKEAVSLMPYGVNFENENKVVLESPGERIEFEMVPLDDSALLSTHEPRRVNDKRANIILILLRMLLVVIHKKQLRRGLKPATSKHKYRADGDLLLLRPVLGRIRHRNYLQVVKRVVTECVLNIVPGSSIELLPQRSEPDTLHAREANIASLNKQIGLFDKILRMPRSELRTSLGAKGVIDLTLKSSNYCNAIIQVIYADSAGKTVFDTVFTELKELEEFLHFIVSEYVL.

A compositionally biased stretch (polar residues) spans 32–43; the sequence is ASATVTTNGTTA. 2 disordered regions span residues 32–68 and 130–159; these read ASAT…EEHS and MGDA…NNDS. Residues 48–57 show a composition bias toward low complexity; sequence DSGSQQSVSS. Residues 58–68 show a composition bias toward polar residues; sequence APIQQNSEEHS. Residues 245–271 are a coiled coil; that stretch reads WKLRSLEDSKALLKENYAKLQKSLEVE.

This sequence belongs to the Mediator complex subunit 17 family. As to quaternary structure, component of the Mediator complex.

It is found in the nucleus. In terms of biological role, component of the Mediator complex, a coactivator involved in the regulated transcription of nearly all RNA polymerase II-dependent genes. Mediator functions as a bridge to convey information from gene-specific regulatory proteins to the basal RNA polymerase II transcription machinery. Mediator is recruited to promoters by direct interactions with regulatory proteins and serves as a scaffold for the assembly of a functional preinitiation complex with RNA polymerase II and the general transcription factors. The sequence is that of Mediator of RNA polymerase II transcription subunit 17 (SRB4) from Eremothecium gossypii (strain ATCC 10895 / CBS 109.51 / FGSC 9923 / NRRL Y-1056) (Yeast).